A 247-amino-acid chain; its full sequence is Flavin-dependent thymidylate synthase (247 aa).

The region spanning 1-237 is the ThyX domain; sequence MDVKLLEATD…PKTFEYYEQE (237 aa). Residues 85 to 88, 98 to 100, and arginine 176 contribute to the dUMP site; these read QITR and SMR. 88–90 contributes to the FAD binding site; sequence RHR. Positions 88 to 98 match the ThyX motif motif; the sequence is RHRHVSFDVQS. FAD is bound by residues 192–194 and histidine 198; that span reads NAR. Arginine 203 serves as a coordination point for dUMP. Catalysis depends on arginine 203, which acts as the Involved in ionization of N3 of dUMP, leading to its activation.

The protein belongs to the thymidylate synthase ThyX family. In terms of assembly, homotetramer. It depends on FAD as a cofactor.

The enzyme catalyses dUMP + (6R)-5,10-methylene-5,6,7,8-tetrahydrofolate + NADPH + H(+) = dTMP + (6S)-5,6,7,8-tetrahydrofolate + NADP(+). Its pathway is pyrimidine metabolism; dTTP biosynthesis. In terms of biological role, catalyzes the reductive methylation of 2'-deoxyuridine-5'-monophosphate (dUMP) to 2'-deoxythymidine-5'-monophosphate (dTMP) while utilizing 5,10-methylenetetrahydrofolate (mTHF) as the methyl donor, and NADPH and FADH(2) as the reductant. This chain is Flavin-dependent thymidylate synthase, found in Haloarcula marismortui (strain ATCC 43049 / DSM 3752 / JCM 8966 / VKM B-1809) (Halobacterium marismortui).